Consider the following 301-residue polypeptide: Probable alpha-L-glutamate ligase 1 (301 aa).

Residues 104–287 enclose the ATP-grasp domain; the sequence is LQLLSRKNIG…VAEKIIQFIE (184 aa). Residues lysine 141, 178 to 179, aspartate 187, and 211 to 213 each bind ATP; these read EY and RSN. 3 residues coordinate Mg(2+): aspartate 248, glutamate 260, and asparagine 262. The Mn(2+) site is built by aspartate 248, glutamate 260, and asparagine 262.

It belongs to the RimK family. Mg(2+) serves as cofactor. The cofactor is Mn(2+).

The sequence is that of Probable alpha-L-glutamate ligase 1 from Shewanella frigidimarina (strain NCIMB 400).